A 172-amino-acid polypeptide reads, in one-letter code: Adenine phosphoribosyltransferase (172 aa).

The protein belongs to the purine/pyrimidine phosphoribosyltransferase family. In terms of assembly, homodimer.

The protein localises to the cytoplasm. It carries out the reaction AMP + diphosphate = 5-phospho-alpha-D-ribose 1-diphosphate + adenine. It participates in purine metabolism; AMP biosynthesis via salvage pathway; AMP from adenine: step 1/1. In terms of biological role, catalyzes a salvage reaction resulting in the formation of AMP, that is energically less costly than de novo synthesis. This is Adenine phosphoribosyltransferase from Latilactobacillus sakei subsp. sakei (strain 23K) (Lactobacillus sakei subsp. sakei).